A 183-amino-acid chain; its full sequence is UPF0340 protein LCA_1354 (183 aa).

Belongs to the UPF0340 family.

The protein is UPF0340 protein LCA_1354 of Latilactobacillus sakei subsp. sakei (strain 23K) (Lactobacillus sakei subsp. sakei).